The chain runs to 384 residues: 2-deoxy-scyllo-inosose synthase (384 aa).

Residues aspartate 42, glutamate 73 to lysine 76, glycine 105 to asparagine 109, threonine 129 to threonine 130, serine 140 to lysine 142, and lysine 151 to asparagine 152 contribute to the NAD(+) site. The active site involves lysine 142. Residue glutamate 184 coordinates Co(2+). Residue glutamate 244 is part of the active site. Residues histidine 247 and histidine 263 each contribute to the Co(2+) site.

It belongs to the sugar phosphate cyclases superfamily. DOI synthase family. NAD(+) serves as cofactor. Requires Co(2+) as cofactor.

It catalyses the reaction D-glucose 6-phosphate = 2-deoxy-L-scyllo-inosose + phosphate. Its pathway is metabolic intermediate biosynthesis; 2-deoxystreptamine biosynthesis; 2-deoxystreptamine from D-glucose 6-phosphate: step 1/4. The protein operates within antibiotic biosynthesis; lividomycin biosynthesis. Catalyzes the intramolecular carbocycle formation from D-glucose-6-phosphate to 2-deoxy-scyllo-inosose (DOI). The chain is 2-deoxy-scyllo-inosose synthase (livC) from Streptomyces lividus.